The following is a 316-amino-acid chain: ATP synthase gamma chain (316 aa).

This sequence belongs to the ATPase gamma chain family. In terms of assembly, F-type ATPases have 2 components, CF(1) - the catalytic core - and CF(0) - the membrane proton channel. CF(1) has five subunits: alpha(3), beta(3), gamma(1), delta(1), epsilon(1). CF(0) has three main subunits: a, b and c.

Its subcellular location is the cellular thylakoid membrane. Produces ATP from ADP in the presence of a proton gradient across the membrane. The gamma chain is believed to be important in regulating ATPase activity and the flow of protons through the CF(0) complex. The chain is ATP synthase gamma chain from Prochlorococcus marinus subsp. pastoris (strain CCMP1986 / NIES-2087 / MED4).